Consider the following 272-residue polypeptide: MAAFSSSSSAPMLIRSVLFVSLLSAAFVFDSGEAGAAHRVVDPEWHPATATWYGSADGDGSDGGACGYGTLVDVVPMKTRVGAVSPVLFKGGEGCGACYKVRCLDASICSRRAVTVIVTDECPGGVCAFGRTHFDLSGAAFARLAVAGHGGQLQNRGEISVVYRRTACKYGGKNIAFHVNEGSTTFWLSLLVEFEDGDGDIGSMQLKQANSAQWQDMKHIWGATWSLTPGPLVGPFSVRLTTLTTRQTLSAQDVIPKNWTPKATYTSRLNFA.

Positions 1 to 25 are cleaved as a signal peptide; sequence MAAFSSSSSAPMLIRSVLFVSLLSA. An Expansin-like EG45 domain is found at 63–173; it reads GGACGYGTLV…RRTACKYGGK (111 aa). 3 cysteine pairs are disulfide-bonded: C66/C95, C98/C168, and C103/C109. One can recognise an Expansin-like CBD domain in the interval 186-267; sequence FWLSLLVEFE…NWTPKATYTS (82 aa).

The protein belongs to the expansin family. Expansin B subfamily.

It is found in the secreted. Its subcellular location is the cell wall. The protein localises to the membrane. In terms of biological role, may cause loosening and extension of plant cell walls by disrupting non-covalent bonding between cellulose microfibrils and matrix glucans. No enzymatic activity has been found. May be required for rapid internodal elongation in deepwater rice during submergence. The polypeptide is Expansin-B16 (EXPB16) (Oryza sativa subsp. japonica (Rice)).